The following is a 231-amino-acid chain: uncharacterized protein (231 aa).

A compositionally biased stretch (basic and acidic residues) spans Met-1 to Asn-10. Residues Met-1–Thr-35 are disordered. The segment covering Gly-11–Asn-24 has biased composition (low complexity). The segment covering Thr-25 to Thr-35 has biased composition (polar residues).

This is an uncharacterized protein from Aquifex aeolicus (strain VF5).